The chain runs to 191 residues: Calcium-activated potassium channel subunit beta-1 (191 aa).

Topologically, residues 1–18 (MGKKLVMAQKRGETRALC) are cytoplasmic. Residues 19-39 (LGVAMVVCAAITYYVLGTTVL) form a helical membrane-spanning segment. The Extracellular segment spans residues 40–155 (PLYQKSVWTQ…VVYQRLYGPQ (116 aa)). Residues Asn80 and Asn142 are each glycosylated (N-linked (GlcNAc...) asparagine). The helical transmembrane segment at 156–176 (VLLFSFFWPTFLLTGGLLLIA) threads the bilayer. At 177–191 (MVKLNRSLSILAAQK) the chain is on the cytoplasmic side.

It belongs to the KCNMB (TC 8.A.14.1) family. KCNMB1 subfamily. Interacts with KCNMA1 tetramer. There are probably 4 molecules of KCMNB1 per KCNMA1 tetramer. In terms of processing, N-glycosylated. Expressed in many tissues containing smooth muscles. In brain and heart, it is not expressed except in the vasculature, such as cerebral arteries, aorta and corona arteries.

The protein localises to the membrane. Functionally, regulatory subunit of the calcium activated potassium KCNMA1 (maxiK) channel. Modulates the calcium sensitivity and gating kinetics of KCNMA1, thereby contributing to KCNMA1 channel diversity. Increases the apparent Ca(2+)/voltage sensitivity of the KCNMA1 channel. It also modifies KCNMA1 channel kinetics and alters its pharmacological properties. It slows down the activation and the deactivation kinetics of the channel. Acts as a negative regulator of smooth muscle contraction by enhancing the calcium sensitivity to KCNMA1. Its presence is also a requirement for internal binding of the KCNMA1 channel opener dehydrosoyasaponin I (DHS-1) triterpene glycoside and for external binding of the agonist hormone 17-beta-estradiol (E2). Increases the binding activity of charybdotoxin (CTX) toxin to KCNMA1 peptide blocker by increasing the CTX association rate and decreasing the dissociation rate. The chain is Calcium-activated potassium channel subunit beta-1 (Kcnmb1) from Mus musculus (Mouse).